The following is a 164-amino-acid chain: Pyruvoyl-dependent arginine decarboxylase (164 aa).

Ser52 bears the Pyruvic acid (Ser) mark.

The protein belongs to the PdaD family. Requires pyruvate as cofactor.

The enzyme catalyses L-arginine + H(+) = agmatine + CO2. The protein is Pyruvoyl-dependent arginine decarboxylase of Methanococcus maripaludis (strain C5 / ATCC BAA-1333).